Reading from the N-terminus, the 515-residue chain is Germ cell-less protein-like 1 (515 aa).

Positions 1–35 (MGSLSSRVLRQPRPALAQQAQGARAGGSARRPDTG) are disordered. Over residues 11 to 29 (QPRPALAQQAQGARAGGSA) the composition is skewed to low complexity. A Nuclear localization signal motif is present at residues 49–55 (SHKRKRS). The interval 65–85 (DSETDEDEEEGDEQQRLLNTP) is disordered. The residue at position 66 (Ser66) is a Phosphoserine. Over residues 67–76 (ETDEDEEEGD) the composition is skewed to acidic residues. Residue Thr68 is modified to Phosphothreonine. A Nuclear localization signal motif is present at residues 85–91 (PRRKKLK). The BTB domain maps to 108–178 (SDIKICALGE…LYRDDVLIKP (71 aa)).

In terms of assembly, interacts with TMPO-beta, TSG101 and TFDP2. Interacts with EMD.

It is found in the nucleus matrix. Functionally, possible function in spermatogenesis. Enhances the degradation of MDM2 and increases the amount of p53 probably by modulating the nucleocytoplasmic transport. The polypeptide is Germ cell-less protein-like 1 (GMCL1) (Homo sapiens (Human)).